The primary structure comprises 139 residues: Glutamate mutase sigma subunit (139 aa).

The B12-binding domain maps to 4 to 139 (KIKLVLGVIG…DLHADFPDHA (136 aa)). Adenosylcob(III)alamin-binding positions include 14-18 (SDCHA), His-17, 62-64 (SSL), and 94-98 (NIVVG).

Belongs to the methylaspartate mutase GlmS subunit family. As to quaternary structure, heterotetramer composed of 2 epsilon subunits (GlmE) and 2 sigma subunits (GlmS). GlmE exists as a homodimer and GlmS as a monomer. It depends on adenosylcob(III)alamin as a cofactor.

It carries out the reaction (2S,3S)-3-methyl-L-aspartate = L-glutamate. Its pathway is amino-acid degradation; L-glutamate degradation via mesaconate pathway; acetate and pyruvate from L-glutamate: step 1/4. Its function is as follows. Catalyzes the carbon skeleton rearrangement of L-glutamate to L-threo-3-methylaspartate ((2S,3S)-3-methylaspartate). This chain is Glutamate mutase sigma subunit, found in Treponema denticola (strain ATCC 35405 / DSM 14222 / CIP 103919 / JCM 8153 / KCTC 15104).